The chain runs to 727 residues: MSKTVVLAEKPSVGRDLARVLKCHKKGNGYLEGDRYIVTWALGHLVTLADPEGYGKEYQSWRLEDLPIIPEPLKLVVIKKTGKQFQAVKSQLIRKDVKDIVIATDAGREGELVARWIIEKAKVTKPLKRLWISSVTDKAIKDGFKNLKNGKDFENLYHSAVARAEADWIVGINATRALTTKFNAQLSCGRVQTPTLAMIAKREEDIKNFKPVPYFGLRAAVDGMTLTWQDKKTSQTRTFNASVTSQLAGALQGKPAVIVDLKKTAKKSFAPGLYDLTELQRDAHKRFGFSAKETLSVLQKLYEQHKLVTYPRTDSRFLSNDIVPTLKDRLEGMQVKPYAQHVARILKRGVKANKSFVNDAKVSDHHAIIPTEEPLALGALSEKERKLYDLIAKRFLAVLMPPFEYEETKVFAEIGGETFTAKGKTVQSQGWKAVYDFADEDDDEEEKDQTLPKLAKGDTLSVRSLTETKGETKPPARFNEGTLLSAMENPAAFMQGEEKNLVKTLGETGGLGTVATRADIIEKLFNTFLIEKKGKDIYITSKGKQLLELVPSDLKSPALTAEWEQKLSGIAKGKLKSSAFIKEMKEYAKQTIREIKSSNQKFKHDNITGTHCPDCGKLMLKVNGKRGTMLVCQDRECGHRKTVAKQTNARCPVCHKRMELRGHGEGQTFACVCGHREKLSVFEKRRAKDKNSKASKRDVHSYMKKQNKDEPINNALAEQLKKLKLDQ.

In terms of domain architecture, Toprim spans 3-136; it reads KTVVLAEKPS…LKRLWISSVT (134 aa). Residues glutamate 9 and aspartate 105 each coordinate Mg(2+). Residues 153–592 form the Topo IA-type catalytic domain; the sequence is FENLYHSAVA…EMKEYAKQTI (440 aa). Positions 187–192 are interaction with DNA; that stretch reads SCGRVQ. Tyrosine 310 (O-(5'-phospho-DNA)-tyrosine intermediate) is an active-site residue. Residues 685 to 711 show a composition bias toward basic and acidic residues; that stretch reads RRAKDKNSKASKRDVHSYMKKQNKDEP. Positions 685–713 are disordered; the sequence is RRAKDKNSKASKRDVHSYMKKQNKDEPIN.

This sequence belongs to the type IA topoisomerase family. Requires Mg(2+) as cofactor.

The catalysed reaction is ATP-independent breakage of single-stranded DNA, followed by passage and rejoining.. In terms of biological role, releases the supercoiling and torsional tension of DNA, which is introduced during the DNA replication and transcription, by transiently cleaving and rejoining one strand of the DNA duplex. Introduces a single-strand break via transesterification at a target site in duplex DNA. The scissile phosphodiester is attacked by the catalytic tyrosine of the enzyme, resulting in the formation of a DNA-(5'-phosphotyrosyl)-enzyme intermediate and the expulsion of a 3'-OH DNA strand. The free DNA strand then undergoes passage around the unbroken strand, thus removing DNA supercoils. Finally, in the religation step, the DNA 3'-OH attacks the covalent intermediate to expel the active-site tyrosine and restore the DNA phosphodiester backbone. The protein is DNA topoisomerase 3 of Bacillus licheniformis (strain ATCC 14580 / DSM 13 / JCM 2505 / CCUG 7422 / NBRC 12200 / NCIMB 9375 / NCTC 10341 / NRRL NRS-1264 / Gibson 46).